Reading from the N-terminus, the 197-residue chain is MAILSDKDIKKYLDEGRIVIDPITNEKQIQPSSVDLRLGDQFKGFKIITKPYIDPFDNTDLESYMSSITVEEDKPFIIHPGEFTLATTYENVKLPDDIVARVEGRSSMGRLGITMHVTAGYIDPGFEGNITLEISNIGKMPVALYPGQRVCQIVFETMTSPSEKPYGHEDRDSKYMGQTGPQVSKIKEDFDIINGGK.

DCTP is bound by residues 105 to 110 (RSSMGR), aspartate 123, 131 to 133 (TLE), glutamine 152, tyrosine 166, lysine 174, and glutamine 178. The active-site Proton donor/acceptor is glutamate 133.

It belongs to the dCTP deaminase family. Homotrimer.

The enzyme catalyses dCTP + 2 H2O = dUMP + NH4(+) + diphosphate. Its pathway is pyrimidine metabolism; dUMP biosynthesis; dUMP from dCTP: step 1/1. Functionally, bifunctional enzyme that catalyzes both the deamination of dCTP to dUTP and the hydrolysis of dUTP to dUMP without releasing the toxic dUTP intermediate. The chain is dCTP deaminase, dUMP-forming from Methanosphaera stadtmanae (strain ATCC 43021 / DSM 3091 / JCM 11832 / MCB-3).